Consider the following 86-residue polypeptide: Small ribosomal subunit protein bS20 (86 aa).

Positions 1-25 (MANIKSQQKRNRTNERARLRNKAVK) are disordered.

Belongs to the bacterial ribosomal protein bS20 family.

In terms of biological role, binds directly to 16S ribosomal RNA. This chain is Small ribosomal subunit protein bS20, found in Mycobacterium bovis (strain ATCC BAA-935 / AF2122/97).